We begin with the raw amino-acid sequence, 424 residues long: Vasopressin V1a receptor (424 aa).

Positions 1-40 are disordered; the sequence is MSFPRGSQDRSVGNSSPWWPLTTEGSNGSQEAARLGEGDS. The Extracellular segment spans residues 1-52; sequence MSFPRGSQDRSVGNSSPWWPLTTEGSNGSQEAARLGEGDSPLGDVRNEELAK. The segment covering 9 to 30 has biased composition (polar residues); that stretch reads DRSVGNSSPWWPLTTEGSNGSQ. A glycan (N-linked (GlcNAc...) asparagine) is linked at Asn-27. A helical membrane pass occupies residues 53–76; it reads LEIAVLAVIFVVAVLGNSSVLLAL. Residues 77 to 88 lie on the Cytoplasmic side of the membrane; the sequence is HRTPRKTSRMHL. The helical transmembrane segment at 89–110 threads the bilayer; that stretch reads FIRHLSLADLAVAFFQVLPQLC. Residues 111–125 are Extracellular-facing; the sequence is WDITYRFRGPDWLCR. Cys-124 and Cys-205 are disulfide-bonded. A helical transmembrane segment spans residues 126 to 147; sequence VVKHLQVFAMFASAYMLVVMTA. At 148-168 the chain is on the cytoplasmic side; the sequence is DRYIAVCHPLKTLQQPARRSR. The helical transmembrane segment at 169–190 threads the bilayer; that stretch reads LMIATSWVLSFILSTPQYFIFS. The Extracellular portion of the chain corresponds to 191–220; that stretch reads VIEIEVNNGTKTQDCWATFIQPWGTRAYVT. A helical membrane pass occupies residues 221 to 241; it reads WMTSGVFVAPVVVLGTCYGFI. At 242–299 the chain is on the cytoplasmic side; the sequence is CYHIWRNIRGKTASSRHSKGDKGSGEAVGPFHKGLLVTPCVSSVKSISRAKIRTVKMT. The helical transmembrane segment at 300–319 threads the bilayer; it reads FVIVSAYILCWAPFFIVQMW. The Extracellular portion of the chain corresponds to 320–337; the sequence is SVWDENFIWTDSENPSIT. The chain crosses the membrane as a helical span at residues 338-357; it reads ITALLASLNSCCNPWIYMFF. Residues 358-424 lie on the Cytoplasmic side of the membrane; that stretch reads SGHLLQDCVQ…KSIRFIPVST (67 aa). S-palmitoyl cysteine attachment occurs at residues Cys-371 and Cys-372. Residues 383-416 are disordered; it reads DSDSMSRRQTSYSNNRSPTNSTGMWKDSPKSSKS. A compositionally biased stretch (polar residues) spans 389–405; the sequence is RRQTSYSNNRSPTNSTG. Phosphoserine is present on Ser-410.

The protein belongs to the G-protein coupled receptor 1 family. Vasopressin/oxytocin receptor subfamily. Post-translationally, palmitoylated on three cysteine residues, of which only two are identified. In terms of tissue distribution, localized within gonadotropes of the anterior pituitary of the brain. Broadly distributed throughout the cerebral cortex.

The protein resides in the cell membrane. The protein localises to the cytoplasmic vesicle membrane. Receptor for arginine vasopressin. The activity of this receptor is mediated by G proteins which activate a phosphatidyl-inositol-calcium second messenger system. Involved in social memory formation. In Rattus norvegicus (Rat), this protein is Vasopressin V1a receptor (Avpr1a).